Consider the following 459-residue polypeptide: D(1)-like dopamine receptor (459 aa).

Topologically, residues Met-1 to Arg-23 are extracellular. An N-linked (GlcNAc...) asparagine glycan is attached at Asn-4. Residues Val-24–Thr-49 form a helical membrane-spanning segment. Topologically, residues Lys-50–Asn-60 are cytoplasmic. Residues Phe-61–Met-87 traverse the membrane as a helical segment. Over Gly-88–Cys-96 the chain is Extracellular. A disulfide bridge connects residues Cys-96 and Cys-187. A helical transmembrane segment spans residues Asn-97–Val-119. Topologically, residues Asp-120–Lys-138 are cytoplasmic. Residues Val-139 to His-164 traverse the membrane as a helical segment. Residues Lys-165–Leu-191 are Extracellular-facing. A helical transmembrane segment spans residues Asn-192 to Thr-216. At Arg-217–Leu-269 the chain is on the cytoplasmic side. The chain crosses the membrane as a helical span at residues Lys-270–Glu-297. Residues Ala-298 to Thr-311 are Extracellular-facing. The chain crosses the membrane as a helical span at residues Phe-312–Asn-333. At Ala-334–Cys-459 the chain is on the cytoplasmic side.

This sequence belongs to the G-protein coupled receptor 1 family.

Its subcellular location is the cell membrane. It is found in the cell projection. The protein resides in the cilium membrane. Functionally, receptor for dopamine. In Takifugu rubripes (Japanese pufferfish), this protein is D(1)-like dopamine receptor (d14).